The chain runs to 119 residues: Large ribosomal subunit protein bL20 (119 aa).

It belongs to the bacterial ribosomal protein bL20 family.

Its function is as follows. Binds directly to 23S ribosomal RNA and is necessary for the in vitro assembly process of the 50S ribosomal subunit. It is not involved in the protein synthesizing functions of that subunit. This Bacillus pumilus (strain SAFR-032) protein is Large ribosomal subunit protein bL20.